The sequence spans 130 residues: D-ribose pyranase (130 aa).

The active-site Proton donor is the His-20. Substrate is bound by residues Asp-28, His-97, and 119 to 121 (YAN).

This sequence belongs to the RbsD / FucU family. RbsD subfamily. In terms of assembly, homodecamer.

The protein localises to the cytoplasm. It catalyses the reaction beta-D-ribopyranose = beta-D-ribofuranose. It participates in carbohydrate metabolism; D-ribose degradation; D-ribose 5-phosphate from beta-D-ribopyranose: step 1/2. Functionally, catalyzes the interconversion of beta-pyran and beta-furan forms of D-ribose. The sequence is that of D-ribose pyranase from Thermoanaerobacter pseudethanolicus (strain ATCC 33223 / 39E) (Clostridium thermohydrosulfuricum).